Consider the following 168-residue polypeptide: Putative defense protein 1 (168 aa).

A signal peptide spans 1–18; it reads MMFAYIVAVVSALALTSA. In terms of domain architecture, Reelin spans 19-168; sequence FPTGAPRSAC…SAPVKILSHH (150 aa). Cys-28 and Cys-105 form a disulfide bridge.

Belongs to the insect defense protein family. Very highly expressed in midgut, and highly expressed in fat body, silk gland and epidermis.

The protein localises to the secreted. Functionally, as this protein is expressed upon bacterial infection, it may have antimicrobial activity. This chain is Putative defense protein 1, found in Antheraea mylitta (Tasar silkworm).